We begin with the raw amino-acid sequence, 876 residues long: Neurotrypsin (876 aa).

An N-terminal signal peptide occupies residues 1–20; sequence MTLARFVLALMLGALPEVVG. N-linked (GlcNAc...) asparagine glycosylation is present at Asn-26. The tract at residues 29–89 is disordered; that stretch reads LHHSHRHSPP…ALQAGHTPRP (61 aa). The segment covering 43 to 54 has biased composition (low complexity); that stretch reads YPSYYLPTQQRP. A compositionally biased stretch (pro residues) spans 57–72; that stretch reads TRPPPPLPRFPRPPRA. The region spanning 94–166 is the Kringle domain; it reads CPAGEPWVSV…GKVDWGYCDC (73 aa). 20 disulfides stabilise this stretch: Cys-94-Cys-166, Cys-110-Cys-150, Cys-139-Cys-164, Cys-196-Cys-260, Cys-209-Cys-270, Cys-240-Cys-250, Cys-306-Cys-370, Cys-319-Cys-380, Cys-350-Cys-360, Cys-413-Cys-476, Cys-426-Cys-486, Cys-456-Cys-466, Cys-526-Cys-590, Cys-539-Cys-600, Cys-570-Cys-580, Cys-620-Cys-751, Cys-662-Cys-678, Cys-766-Cys-832, Cys-795-Cys-809, and Cys-822-Cys-851. SRCR domains are found at residues 171–272, 281–382, 388–488, and 501–602; these read VRLR…TCSF, IRLA…SCTP, IRLA…ACYP, and VRLM…ICDY. The zymogen activation region stretch occupies residues 620–631; that stretch reads CGLRLLHRRQKR. Positions 632 to 875 constitute a Peptidase S1 domain; it reads IIGGKNSLRG…FVPWIKSVTK (244 aa). His-677 functions as the Charge relay system in the catalytic mechanism. Asn-684 carries N-linked (GlcNAc...) asparagine glycosylation. Residue Asp-727 is the Charge relay system of the active site. Ser-826 (charge relay system) is an active-site residue.

It belongs to the peptidase S1 family.

Its subcellular location is the secreted. In terms of biological role, plays a role in neuronal plasticity and the proteolytic action may subserve structural reorganizations associated with learning and memory operations. The chain is Neurotrypsin (PRSS12) from Gorilla gorilla gorilla (Western lowland gorilla).